The primary structure comprises 487 residues: Protein nucleotidyltransferase YdiU (487 aa).

ATP contacts are provided by Gly90, Gly92, Arg93, Lys113, Asp125, Gly126, Arg176, and Arg183. Asp252 functions as the Proton acceptor in the catalytic mechanism. 2 residues coordinate Mg(2+): Asn253 and Asp262. Asp262 serves as a coordination point for ATP.

Belongs to the SELO family. Mg(2+) serves as cofactor. It depends on Mn(2+) as a cofactor.

It carries out the reaction L-seryl-[protein] + ATP = 3-O-(5'-adenylyl)-L-seryl-[protein] + diphosphate. It catalyses the reaction L-threonyl-[protein] + ATP = 3-O-(5'-adenylyl)-L-threonyl-[protein] + diphosphate. The enzyme catalyses L-tyrosyl-[protein] + ATP = O-(5'-adenylyl)-L-tyrosyl-[protein] + diphosphate. The catalysed reaction is L-histidyl-[protein] + UTP = N(tele)-(5'-uridylyl)-L-histidyl-[protein] + diphosphate. It carries out the reaction L-seryl-[protein] + UTP = O-(5'-uridylyl)-L-seryl-[protein] + diphosphate. It catalyses the reaction L-tyrosyl-[protein] + UTP = O-(5'-uridylyl)-L-tyrosyl-[protein] + diphosphate. In terms of biological role, nucleotidyltransferase involved in the post-translational modification of proteins. It can catalyze the addition of adenosine monophosphate (AMP) or uridine monophosphate (UMP) to a protein, resulting in modifications known as AMPylation and UMPylation. This is Protein nucleotidyltransferase YdiU from Pseudomonas savastanoi pv. phaseolicola (strain 1448A / Race 6) (Pseudomonas syringae pv. phaseolicola (strain 1448A / Race 6)).